Reading from the N-terminus, the 449-residue chain is Cytochrome P450 monooxygenase iliC (449 aa).

The chain crosses the membrane as a helical span at residues threonine 28–glycine 44. Cysteine 397 contributes to the heme binding site.

The protein belongs to the cytochrome P450 family. Requires heme as cofactor.

The protein resides in the membrane. The enzyme catalyses (3E,5S)-3-[(2E,4E,8S,10E,12Z)-1-hydroxy-4,8-dimethyltetradeca-2,4,10,12-tetraen-1-ylidene]-5-[(4-hydroxyphenyl)methyl]pyrrolidine-2,4-dione + reduced [NADPH--hemoprotein reductase] + O2 = 3-[(2E,4E,8S,10E,12Z)-4,8-dimethyltetradeca-2,4,10,12-tetraenoyl]-4-hydroxy-5-(4-hydroxyphenyl)-1,2-dihydropyridin-2-one + oxidized [NADPH--hemoprotein reductase] + 2 H2O. It functions in the pathway mycotoxin biosynthesis. Its function is as follows. Cytochrome P450 monooxygenase; part of the gene cluster that mediates the biosynthesis of ilicicolin H, a 4-hydroxy-2-pyridonealkaloid that has potent and broad antifungal activities by inhibiting the mitochondrial respiration chain. IliC catalyzes the ring expansion of the tetramate intermediate to the acyclic 2-pyridone intermediate that contains the trans bis-diene chain. The biosynthesis of ilicicolin H starts with formation of the tetramic acid by the hybrid PKS-NRPS synthetase iliA with the partnering trans-enoyl reductase iliB since iliA lacks a designated enoylreductase (ER) domain. The cytochrome P450 monooxygenase iliC then catalyzes the ring expansion of the tetramate to the acyclic 2-pyridone. The pericyclase iliD further converts the acyclic 2-pyridone into 8-epi-ilicicolin H. 8-epi-ilicicolin H might then spontaneously convert to ilicicolin H since ilicicolin H is produced in the absence of the epimerase iliE, in contrast to what was observed for the Talaromyces variabilis ilicolin H biosynthetic pathway. This chain is Cytochrome P450 monooxygenase iliC, found in Hypocrea jecorina (strain QM6a) (Trichoderma reesei).